The chain runs to 141 residues: Large-conductance mechanosensitive channel (141 aa).

3 consecutive transmembrane segments (helical) span residues 8–28, 38–58, and 80–100; these read FALKGNVVDLAIGVIIGAAFG, IIMPFFGALGGLDFSNYFFPL, and GNFLTVAVNFLIIAFVLFLIV.

It belongs to the MscL family. Homopentamer.

Its subcellular location is the cell inner membrane. Functionally, channel that opens in response to stretch forces in the membrane lipid bilayer. May participate in the regulation of osmotic pressure changes within the cell. The polypeptide is Large-conductance mechanosensitive channel (Beijerinckia indica subsp. indica (strain ATCC 9039 / DSM 1715 / NCIMB 8712)).